Reading from the N-terminus, the 167-residue chain is Cell division protein SepF (167 aa).

Positions E25–L64 are disordered. Positions K39–Q51 are enriched in basic residues.

The protein belongs to the SepF family. Homodimer. Interacts with FtsZ.

Its subcellular location is the cytoplasm. In terms of biological role, cell division protein that is part of the divisome complex and is recruited early to the Z-ring. Probably stimulates Z-ring formation, perhaps through the cross-linking of FtsZ protofilaments. Its function overlaps with FtsA. This Natranaerobius thermophilus (strain ATCC BAA-1301 / DSM 18059 / JW/NM-WN-LF) protein is Cell division protein SepF.